Reading from the N-terminus, the 247-residue chain is ATP synthase subunit a, chloroplastic (247 aa).

5 helical membrane passes run 38 to 58, 95 to 115, 134 to 154, 199 to 219, and 220 to 240; these read QVLI…TIAV, VPFI…GALL, INTT…AGLT, LVVV…VMLL, and GLFT…AYIG.

Belongs to the ATPase A chain family. In terms of assembly, F-type ATPases have 2 components, CF(1) - the catalytic core - and CF(0) - the membrane proton channel. CF(1) has five subunits: alpha(3), beta(3), gamma(1), delta(1), epsilon(1). CF(0) has four main subunits: a, b, b' and c.

The protein resides in the plastid. It is found in the chloroplast thylakoid membrane. Its function is as follows. Key component of the proton channel; it plays a direct role in the translocation of protons across the membrane. The sequence is that of ATP synthase subunit a, chloroplastic from Solanum lycopersicum (Tomato).